We begin with the raw amino-acid sequence, 37 residues long: Large ribosomal subunit protein bL36 (37 aa).

This sequence belongs to the bacterial ribosomal protein bL36 family.

The sequence is that of Large ribosomal subunit protein bL36 from Synechococcus sp. (strain CC9311).